Consider the following 364-residue polypeptide: Uroporphyrinogen decarboxylase (364 aa).

Substrate contacts are provided by residues 28–32, Asp-78, Tyr-160, Thr-215, and His-333; that span reads RQAGR.

It belongs to the uroporphyrinogen decarboxylase family. Homodimer.

It is found in the cytoplasm. It carries out the reaction uroporphyrinogen III + 4 H(+) = coproporphyrinogen III + 4 CO2. Its pathway is porphyrin-containing compound metabolism; protoporphyrin-IX biosynthesis; coproporphyrinogen-III from 5-aminolevulinate: step 4/4. Functionally, catalyzes the decarboxylation of four acetate groups of uroporphyrinogen-III to yield coproporphyrinogen-III. This is Uroporphyrinogen decarboxylase from Burkholderia pseudomallei (strain 668).